A 234-amino-acid chain; its full sequence is MAKLDAHDIIRTIAESKKKTPVKVYVKGDLNSLDVPSNVETYFTDNVGVMFGDWADVEPILKDSSVESYHLENDGRNTGVAMVDKKKFNARIEPGAIIRDQVEIGDNAVVMMGAVINIGAEIGEGSMIDMGAVLGGRAIVGKNCHIGAGTVLAGVVEPPSAQPVVIEDDVLIGANAVVLEGVRVGKGAVVGAGAVVTKDVEPYTVVMGMPAKKVKDVSQVDDSKTEIVDDLRKL.

This sequence belongs to the transferase hexapeptide repeat family. DapH subfamily.

The enzyme catalyses (S)-2,3,4,5-tetrahydrodipicolinate + acetyl-CoA + H2O = L-2-acetamido-6-oxoheptanedioate + CoA. It participates in amino-acid biosynthesis; L-lysine biosynthesis via DAP pathway; LL-2,6-diaminopimelate from (S)-tetrahydrodipicolinate (acetylase route): step 1/3. Catalyzes the transfer of an acetyl group from acetyl-CoA to tetrahydrodipicolinate. The sequence is that of 2,3,4,5-tetrahydropyridine-2,6-dicarboxylate N-acetyltransferase from Ligilactobacillus salivarius (strain UCC118) (Lactobacillus salivarius).